Reading from the N-terminus, the 201-residue chain is Dephospho-CoA kinase (201 aa).

Residues 4–201 (TIGLTGGIAS…ILKQWDALEK (198 aa)) enclose the DPCK domain. Residue 12-17 (ASGKST) coordinates ATP.

Belongs to the CoaE family.

The protein resides in the cytoplasm. It catalyses the reaction 3'-dephospho-CoA + ATP = ADP + CoA + H(+). Its pathway is cofactor biosynthesis; coenzyme A biosynthesis; CoA from (R)-pantothenate: step 5/5. Functionally, catalyzes the phosphorylation of the 3'-hydroxyl group of dephosphocoenzyme A to form coenzyme A. The polypeptide is Dephospho-CoA kinase (Geobacillus kaustophilus (strain HTA426)).